A 362-amino-acid chain; its full sequence is DNA polymerase IV (362 aa).

The UmuC domain occupies I6–G187. Positions 10 and 105 each coordinate Mg(2+). The active site involves E106.

The protein belongs to the DNA polymerase type-Y family. Monomer. Mg(2+) serves as cofactor.

The protein localises to the cytoplasm. It carries out the reaction DNA(n) + a 2'-deoxyribonucleoside 5'-triphosphate = DNA(n+1) + diphosphate. Functionally, poorly processive, error-prone DNA polymerase involved in untargeted mutagenesis. Copies undamaged DNA at stalled replication forks, which arise in vivo from mismatched or misaligned primer ends. These misaligned primers can be extended by PolIV. Exhibits no 3'-5' exonuclease (proofreading) activity. May be involved in translesional synthesis, in conjunction with the beta clamp from PolIII. The chain is DNA polymerase IV from Leptospira interrogans serogroup Icterohaemorrhagiae serovar Lai (strain 56601).